Consider the following 811-residue polypeptide: Leucine--tRNA ligase (811 aa).

A 'HIGH' region motif is present at residues 40-50; the sequence is PYPSGRLHMGH. Residues 579 to 583 carry the 'KMSKS' region motif; the sequence is KMSKS. K582 serves as a coordination point for ATP.

Belongs to the class-I aminoacyl-tRNA synthetase family.

It localises to the cytoplasm. It carries out the reaction tRNA(Leu) + L-leucine + ATP = L-leucyl-tRNA(Leu) + AMP + diphosphate. The protein is Leucine--tRNA ligase of Campylobacter fetus subsp. fetus (strain 82-40).